We begin with the raw amino-acid sequence, 327 residues long: DNA-directed RNA polymerase subunit alpha (327 aa).

Residues 1–231 form an alpha N-terminal domain (alpha-NTD) region; the sequence is MIYQMQMPAK…DHVTFFANFS (231 aa). The segment at 252–327 is alpha C-terminal domain (alpha-CTD); sequence MRRLFHTKIE…GMDITKYQMK (76 aa).

Belongs to the RNA polymerase alpha chain family. As to quaternary structure, homodimer. The RNAP catalytic core consists of 2 alpha, 1 beta, 1 beta' and 1 omega subunit. When a sigma factor is associated with the core the holoenzyme is formed, which can initiate transcription.

It carries out the reaction RNA(n) + a ribonucleoside 5'-triphosphate = RNA(n+1) + diphosphate. Functionally, DNA-dependent RNA polymerase catalyzes the transcription of DNA into RNA using the four ribonucleoside triphosphates as substrates. This chain is DNA-directed RNA polymerase subunit alpha, found in Pelodictyon phaeoclathratiforme (strain DSM 5477 / BU-1).